Here is a 547-residue protein sequence, read N- to C-terminus: Sterol carrier protein 2 (547 aa).

Ser-3 is subject to Phosphoserine. Lys-132 carries the post-translational modification N6-acetyllysine; alternate. Residue Lys-132 is modified to N6-succinyllysine; alternate. The residue at position 168 (Lys-168) is an N6-succinyllysine. Lys-173 and Lys-177 each carry N6-acetyllysine. Lys-183 is modified (N6-acetyllysine; alternate). Lys-183 carries the post-translational modification N6-succinyllysine; alternate. Lys-282 is modified (N6-succinyllysine). Residues Lys-341, Lys-432, Lys-438, Lys-443, and Lys-453 each carry the N6-acetyllysine; alternate modification. Residues Lys-341, Lys-432, Lys-438, Lys-443, and Lys-453 each carry the N6-succinyllysine; alternate modification. One can recognise an SCP2 domain in the interval 433 to 543; the sequence is ANLVFKEIEK…KLQNLQLQPG (111 aa). Lys-464 carries the post-translational modification N6-succinyllysine. Residue Lys-470 is modified to N6-acetyllysine; alternate. Lys-470 is modified (N6-succinyllysine; alternate). Lys-479 is modified (N6-succinyllysine). Lys-491 carries the post-translational modification N6-acetyllysine. Residues Lys-492 and Lys-511 each carry the N6-succinyllysine modification. Ser-516 is modified (phosphoserine). N6-succinyllysine is present on residues Lys-522 and Lys-534. Residues 545–547 carry the Microbody targeting signal motif; it reads AKL.

This sequence in the N-terminal section; belongs to the thiolase-like superfamily. Thiolase family. In terms of assembly, interacts with PEX5; the interaction is essential for peroxisomal import. PreSCP2, a protein with a molecular mass of about 15 kDa, is processed into its mature form (SCP2) by proteolytic cleavage of a 20 residue leader sequence after translocation into peroxisomes. Liver, fibroblasts, and placenta.

It localises to the peroxisome. The protein resides in the cytoplasm. It is found in the mitochondrion. The protein localises to the endoplasmic reticulum. The enzyme catalyses choloyl-CoA + propanoyl-CoA = 3alpha,7alpha,12alpha-trihydroxy-24-oxo-5beta-cholestan-26-oyl-CoA + CoA. The catalysed reaction is 4,8,12-trimethyltridecanoyl-CoA + propanoyl-CoA = 3-oxopristanoyl-CoA + CoA. It catalyses the reaction an acyl-CoA + acetyl-CoA = a 3-oxoacyl-CoA + CoA. It carries out the reaction hexanoyl-CoA + acetyl-CoA = 3-oxooctanoyl-CoA + CoA. The enzyme catalyses tetradecanoyl-CoA + acetyl-CoA = 3-oxohexadecanoyl-CoA + CoA. The catalysed reaction is 3-oxohexadecanedioyl-CoA + CoA = tetradecanedioyl-CoA + acetyl-CoA. It catalyses the reaction propanoyl-CoA + tetradecanoyl-CoA = 3-oxo-2-methylhexadecanoyl-CoA + CoA. It carries out the reaction butanoyl-CoA + acetyl-CoA = 3-oxohexanoyl-CoA + CoA. The enzyme catalyses octanoyl-CoA + acetyl-CoA = 3-oxodecanoyl-CoA + CoA. The catalysed reaction is decanoyl-CoA + acetyl-CoA = 3-oxododecanoyl-CoA + CoA. It catalyses the reaction dodecanoyl-CoA + acetyl-CoA = 3-oxotetradecanoyl-CoA + CoA. It carries out the reaction hexadecanoyl-CoA + acetyl-CoA = 3-oxooctadecanoyl-CoA + CoA. The enzyme catalyses 3-oxo-(9Z-octadecenoyl)-CoA + CoA = (7Z)-hexadecenoyl-CoA + acetyl-CoA. The catalysed reaction is 7-dehydrocholesterol(in) = 7-dehydrocholesterol(out). Its function is as follows. Plays a crucial role in the peroxisomal oxidation of branched-chain fatty acids. Catalyzes the last step of the peroxisomal beta-oxidation of branched chain fatty acids and the side chain of the bile acid intermediates di- and trihydroxycoprostanic acids (DHCA and THCA). Also active with medium and long straight chain 3-oxoacyl-CoAs. Stimulates the microsomal conversion of 7-dehydrocholesterol to cholesterol and transfers phosphatidylcholine and 7-dehydrocholesterol between membrances, in vitro. Isoforms SCP2 and SCPx cooperate in peroxisomal oxidation of certain naturally occurring tetramethyl-branched fatty acyl-CoAs. Functionally, mediates the transfer of all common phospholipids, cholesterol and gangliosides from the endoplasmic reticulum to the plasma membrane. May play a role in regulating steroidogenesis. Stimulates the microsomal conversion of 7-dehydrocholesterol to cholesterol. Also binds fatty acids and fatty acyl Coenzyme A (CoA) such as phytanoyl-CoA. Involved in the regulation phospholipid synthesis in endoplasmic reticulum enhancing the incorporation of exogenous fatty acid into glycerides. Seems to stimulate the rate-limiting step in phosphatidic acid formation mediated by GPAT3. Isoforms SCP2 and SCPx cooperate in peroxisomal oxidation of certain naturally occurring tetramethyl-branched fatty acyl-CoAs. This is Sterol carrier protein 2 from Homo sapiens (Human).